The primary structure comprises 342 residues: Delta(6)-protoilludene synthase (342 aa).

Mg(2+)-binding residues include aspartate 81, asparagine 217, serine 221, and glutamate 225. The DDXXD motif motif lies at 81–85; the sequence is DEYSD. Arginine 306 and tyrosine 307 together coordinate (2E,6E)-farnesyl diphosphate.

The protein belongs to the terpene synthase family. Mg(2+) is required as a cofactor.

It carries out the reaction (2E,6E)-farnesyl diphosphate = Delta(6)-protoilludene + diphosphate. Functionally, delta(6)-protoilludene synthase, part of the gene cluster that mediates the biosynthesis of melleolides, a range of antifungal and phytotoxic polyketide derivatives composed of an orsellinic acid (OA) moiety esterified to various sesquiterpene alcohols. The first step in melleolides biosynthesis is performed by the delta(6)-protoilludene synthase PRO1 which catalyzes the cyclization of farnesyl diphosphate to protoilludene. The orsellinic acid synthase armB produces OA by condensing acetyl-CoA with 3 malonyl-CoA units in a three-round chain elongation reaction folowed by a C2-C7 ring closure. ArmB further catalyzes the trans-esterification of OA to the various sesquiterpene alcohols resulting from the hydroxylation of protoilludene. The melleolides cluster also includes 5 cytochrome P450 monooxygenases, 4 NAD(+)-dependent oxidoreductases, one flavin-dependent oxidoreductase, and one O-methyltransferase. The cytochrome P450 monooxygenases may be involved in protoilludene hydroxylation to elaborate melleolides with multiple alcohol groups, such as melleolide D, which carries alcohol functionalities at C-4, C-5, C-10, and C-13. The role of the NAD(+)-dependent enzymes remains unknown. Numerous melleolides, including arnamial, show 5'-O-methylation of the aromatic moiety which may be catalyzed by the methyltransferase encoded in the cluster. The flavin-dependent oxidoreductase might represent the dehydrogenase yielding the aldehyde in position 1 of arnamial and other melleolides. Finally, several halogenases, localized outside of the cluster, are able to catalyze the transfer of a single chlorine atom to the melleolide backbone, resulting in a 6'-chloromelleolide product. The sequence is that of Delta(6)-protoilludene synthase from Armillaria ostoyae (Armillaria root rot fungus).